The sequence spans 350 residues: Alcohol dehydrogenase 1 (350 aa).

Zn(2+)-binding residues include cysteine 46, histidine 69, cysteine 100, cysteine 103, cysteine 106, cysteine 114, and cysteine 156. NAD(+) contacts are provided by residues 180–186 (GAGGGLG), aspartate 204, lysine 209, 271–273 (VGL), and arginine 343.

Belongs to the zinc-containing alcohol dehydrogenase family. In terms of assembly, homotetramer. Requires Zn(2+) as cofactor.

It localises to the cytoplasm. It catalyses the reaction a primary alcohol + NAD(+) = an aldehyde + NADH + H(+). The enzyme catalyses a secondary alcohol + NAD(+) = a ketone + NADH + H(+). This is Alcohol dehydrogenase 1 (ADH1) from Candida albicans (Yeast).